The chain runs to 590 residues: Aspartate--tRNA(Asp/Asn) ligase (590 aa).

Residue Glu176 coordinates L-aspartate. Positions 200–203 (QLFK) are aspartate. L-aspartate is bound by residues Arg222 and His451. 222 to 224 (RDE) provides a ligand contact to ATP. Glu485 serves as a coordination point for ATP. Arg492 contributes to the L-aspartate binding site. 537–540 (GIDR) serves as a coordination point for ATP.

This sequence belongs to the class-II aminoacyl-tRNA synthetase family. Type 1 subfamily. In terms of assembly, homodimer.

It localises to the cytoplasm. It catalyses the reaction tRNA(Asx) + L-aspartate + ATP = L-aspartyl-tRNA(Asx) + AMP + diphosphate. Aspartyl-tRNA synthetase with relaxed tRNA specificity since it is able to aspartylate not only its cognate tRNA(Asp) but also tRNA(Asn). Reaction proceeds in two steps: L-aspartate is first activated by ATP to form Asp-AMP and then transferred to the acceptor end of tRNA(Asp/Asn). This is Aspartate--tRNA(Asp/Asn) ligase from Ehrlichia canis (strain Jake).